The sequence spans 380 residues: Cytochrome b (380 aa).

Transmembrane regions (helical) follow at residues 34–54 (FGSL…LLAA), 78–99 (WLIR…YLHI), 114–134 (WNTG…GYVL), and 179–199 (FFAL…IHLA). The heme b site is built by histidine 84 and histidine 98. Positions 183 and 197 each coordinate heme b. Residue histidine 202 participates in a ubiquinone binding. 4 consecutive transmembrane segments (helical) span residues 227-247 (LKDI…ALFS), 289-309 (LGGV…PLLH), 321-341 (LSQL…WIGS), and 348-368 (FIII…ILFP).

The protein belongs to the cytochrome b family. The cytochrome bc1 complex contains 11 subunits: 3 respiratory subunits (MT-CYB, CYC1 and UQCRFS1), 2 core proteins (UQCRC1 and UQCRC2) and 6 low-molecular weight proteins (UQCRH/QCR6, UQCRB/QCR7, UQCRQ/QCR8, UQCR10/QCR9, UQCR11/QCR10 and a cleavage product of UQCRFS1). This cytochrome bc1 complex then forms a dimer. It depends on heme b as a cofactor.

Its subcellular location is the mitochondrion inner membrane. Component of the ubiquinol-cytochrome c reductase complex (complex III or cytochrome b-c1 complex) that is part of the mitochondrial respiratory chain. The b-c1 complex mediates electron transfer from ubiquinol to cytochrome c. Contributes to the generation of a proton gradient across the mitochondrial membrane that is then used for ATP synthesis. This Cyrtonyx montezumae (Montezuma quail) protein is Cytochrome b (MT-CYB).